A 558-amino-acid chain; its full sequence is Inositol-3-phosphate synthase 1 (558 aa).

NAD(+)-binding residues include Gly67, Gly68, Asn69, Asn70, Asp141, Ser177, Val178, Gln188, Arg191, Thr228, Ala229, Asn230, Thr231, Gly278, Ser279, Asp303, Ser306, Asn337, Asn338, Asp339, and Lys352. Ser279 carries the phosphoserine modification. Residue Ser357 is modified to Phosphoserine. NAD(+)-binding residues include Gly390, Asp391, Asp419, and Ser420. The interval 537–558 (ATNGCTGDANGHLQEEPPMPTT) is disordered.

The protein belongs to the myo-inositol 1-phosphate synthase family. The cofactor is NAD(+). Phosphorylation at Ser-279 and Ser-357 may be associated with a decrease in activity. Highly expressed in testis, ovary, heart, placenta and pancreas. Weakly expressed in blood leukocyte, thymus, skeletal muscle and colon.

The protein localises to the cytoplasm. The enzyme catalyses D-glucose 6-phosphate = 1D-myo-inositol 3-phosphate. Its pathway is polyol metabolism; myo-inositol biosynthesis; myo-inositol from D-glucose 6-phosphate: step 1/2. With respect to regulation, inhibited by mood-stabilizing drugs such as valproate (VPA) and lithium. In terms of biological role, key enzyme in myo-inositol biosynthesis pathway that catalyzes the conversion of glucose 6-phosphate to 1-myo-inositol 1-phosphate in a NAD-dependent manner. Rate-limiting enzyme in the synthesis of all inositol-containing compounds. In Homo sapiens (Human), this protein is Inositol-3-phosphate synthase 1 (ISYNA1).